The chain runs to 782 residues: Lysosome membrane protein 2-C (782 aa).

At 1 to 7 (MVANNKG) the chain is on the cytoplasmic side. A helical transmembrane segment spans residues 8 to 28 (LLIAGLLLSVIGAALFVISLA). The Lumenal segment spans residues 29–739 (LLPSVLNVAT…QQFKQIQTVK (711 aa)). N-linked (GlcNAc...) asparagine glycosylation is found at Asn77, Asn105, Asn191, Asn219, Asn234, Asn243, Asn281, Asn368, Asn387, Asn401, Asn427, Asn432, Asn451, Asn465, Asn501, Asn536, Asn540, Asn595, Asn605, Asn613, Asn646, and Asn692. Residues 740–760 (IAPVVVVSIFGGILLIAGLVM) traverse the membrane as a helical segment. At 761–782 (AINGFRKTFYNNNQYNGYNIIN) the chain is on the cytoplasmic side. Positions 777–781 (GYNII) match the Tyrosine-type lysosomal sorting signal motif.

Belongs to the CD36 family. Heavily glycosylated.

Its subcellular location is the lysosome membrane. Functionally, may act as a lysosomal receptor. May be involved role in macropinocytosis and fluid phase exocytosis. In Dictyostelium discoideum (Social amoeba), this protein is Lysosome membrane protein 2-C (lmpC).